Reading from the N-terminus, the 675-residue chain is Probable metal-nicotianamine transporter YSL16 (675 aa).

Gly residues predominate over residues 1-11 (MDRHALGGGGA). The segment at 1-20 (MDRHALGGGGALEIEKTPEA) is disordered. 14 helical membrane-spanning segments follow: residues 50–70 (GMVA…KLSL), 73–93 (GLIP…LRGW), 118–138 (CAVA…LLGL), 162–182 (GIGW…LTLL), 231–251 (ISFL…CGFL), 283–303 (LVNL…WPLI), 329–349 (FICI…VIVV), 393–413 (MAYT…PVMF), 421–441 (VIIA…GTGL), 453–473 (IALF…AGLV), 507–527 (VGQV…FFLF), 567–587 (LQLC…RDFL), 605–625 (FLVG…VFLW), and 633–653 (AALL…IWTF).

The protein belongs to the YSL (TC 2.A.67.2) family. In terms of tissue distribution, expressed in roots.

The protein localises to the membrane. In terms of biological role, may be involved in the transport of nicotianamine-chelated metals. This Oryza sativa subsp. japonica (Rice) protein is Probable metal-nicotianamine transporter YSL16 (YSL16).